A 210-amino-acid polypeptide reads, in one-letter code: LexA repressor (210 aa).

Residues 31 to 51 (RVEISKELGFRSPNAAEEHLK) constitute a DNA-binding region (H-T-H motif). Catalysis depends on for autocatalytic cleavage activity residues Ser126 and Lys163.

The protein belongs to the peptidase S24 family. In terms of assembly, homodimer.

The enzyme catalyses Hydrolysis of Ala-|-Gly bond in repressor LexA.. In terms of biological role, represses a number of genes involved in the response to DNA damage (SOS response), including recA and lexA. In the presence of single-stranded DNA, RecA interacts with LexA causing an autocatalytic cleavage which disrupts the DNA-binding part of LexA, leading to derepression of the SOS regulon and eventually DNA repair. In Histophilus somni (strain 129Pt) (Haemophilus somnus), this protein is LexA repressor.